The primary structure comprises 53 residues: Non-classical export protein 1 (53 aa).

A helical membrane pass occupies residues 7-29 (FLLGKFSDPLLAIMVGCLSYYVY).

It belongs to the NCE101 family.

It localises to the membrane. Involved in a novel pathway of export of proteins that lack a cleavable signal sequence. May be part of the export machinery or may also be a substrate for non-classical export. This chain is Non-classical export protein 1 (NCE101), found in Saccharomyces cerevisiae (strain ATCC 204508 / S288c) (Baker's yeast).